We begin with the raw amino-acid sequence, 688 residues long: MNFENLLIELGTEELPPKALRKLAESFLANFTEELTKADLAFKSAVWYAAPRRLAINVTELAIAQADKIVEKRGPAVSSAFDAEGKPTKAAEGWARGNGITVDQAERLVTDKGEWLVYNAKVEGVETKSLIAAMAQRALDKLPIPKPMRWGSSKTQFIRPVHTATMLLGSELIEGELLGIKSARNVRGHRFMGTGFELDHADNYLTLLKEKGKVIADYESRKALIKADAEKAAAKIGGTADIEDDLLEEVTSLVEWPVVLTASFEEKFLNVPSEALVYTMKGDQKYFPVFDEAGKLLPNFIFVANIESKDPAQIIAGNEKVVRPRLADAEFFFNTDKKHTLESRLPSLETVLFQQQLGTLKDKVTRISALAAFIAEQTGANAVDAARAGLLSKTDLMTNMVMEFTDTQGTMGMHYARLDGETEAVALAMEEQYKPKFSGDTVPTAAVSCAVALADKLDTLVGIFGIGQAPKGAADPFALRRAAIGVLRIIVENKLPLDLVTLIAKAQELHGTNLSNANASDEVLEFLMARFRAWYQDKGIDVDVILAVLARRPTRPADFDSRINAVSHFRSLEASSALAAANKRVSNILAKVEGELPTAINSALLAEAAEQALAAKLAELQPQLAPLFANADYQQALTLLSSLRESVDQFFEDVMVMADDEALKNNRLALLNNLREQFLHVADISLLQ.

The protein belongs to the class-II aminoacyl-tRNA synthetase family. In terms of assembly, tetramer of two alpha and two beta subunits.

Its subcellular location is the cytoplasm. The catalysed reaction is tRNA(Gly) + glycine + ATP = glycyl-tRNA(Gly) + AMP + diphosphate. The protein is Glycine--tRNA ligase beta subunit of Shewanella sp. (strain MR-4).